Consider the following 274-residue polypeptide: 2,3,4,5-tetrahydropyridine-2,6-dicarboxylate N-succinyltransferase (274 aa).

Residues Arg104 and Asp141 each coordinate substrate.

This sequence belongs to the transferase hexapeptide repeat family. Homotrimer.

It localises to the cytoplasm. The enzyme catalyses (S)-2,3,4,5-tetrahydrodipicolinate + succinyl-CoA + H2O = (S)-2-succinylamino-6-oxoheptanedioate + CoA. It participates in amino-acid biosynthesis; L-lysine biosynthesis via DAP pathway; LL-2,6-diaminopimelate from (S)-tetrahydrodipicolinate (succinylase route): step 1/3. This is 2,3,4,5-tetrahydropyridine-2,6-dicarboxylate N-succinyltransferase from Shewanella amazonensis (strain ATCC BAA-1098 / SB2B).